The following is a 321-amino-acid chain: Beta-1,3-N-acetylglucosaminyltransferase manic fringe (321 aa).

Over 1–7 the chain is Cytoplasmic; sequence MQCRLPR. The helical; Signal-anchor for type II membrane protein transmembrane segment at 8–27 threads the bilayer; it reads GLAGALLTLLCMGLLCLRYH. At 28 to 321 the chain is on the lumenal side; the sequence is LNLSPQRVQE…TPWCPQLGAR (294 aa). Residue arginine 70 coordinates substrate. Asparagine 109 carries an N-linked (GlcNAc...) asparagine glycan. 2 cysteine pairs are disulfide-bonded: cysteine 110/cysteine 121 and cysteine 139/cysteine 202. Substrate is bound at residue aspartate 143. Aspartate 144 serves as a coordination point for Mn(2+). N-linked (GlcNAc...) asparagine glycosylation is present at asparagine 185. The active site involves aspartate 232. Mn(2+) is bound at residue histidine 256. Cysteines 306 and 315 form a disulfide.

The protein belongs to the glycosyltransferase 31 family. Mn(2+) serves as cofactor.

The protein localises to the golgi apparatus membrane. It catalyses the reaction 3-O-(alpha-L-fucosyl)-L-threonyl-[EGF-like domain protein] + UDP-N-acetyl-alpha-D-glucosamine = 3-O-(N-acetyl-beta-D-glucosaminyl-(1-&gt;3)-alpha-L-fucosyl)-L-threonyl-[EGF-like domain protein] + UDP + H(+). The catalysed reaction is 3-O-(alpha-L-fucosyl)-L-seryl-[EGF-like domain protein] + UDP-N-acetyl-alpha-D-glucosamine = 3-O-(N-acetyl-beta-D-glucosaminyl-(1-&gt;3)-alpha-L-fucosyl)-L-seryl-[EGF-like domain protein] + UDP + H(+). Glycosyltransferase that initiates the elongation of O-linked fucose residues attached to EGF-like repeats in the extracellular domain of Notch molecules. Modulates NOTCH1 activity by modifying O-fucose residues at specific EGF-like domains resulting in inhibition of NOTCH1 activation by JAG1 and enhancement of NOTCH1 activation by DLL1 via an increase in its binding to DLL1. The polypeptide is Beta-1,3-N-acetylglucosaminyltransferase manic fringe (MFNG) (Pan troglodytes (Chimpanzee)).